Consider the following 84-residue polypeptide: Acyl carrier protein homolog (84 aa).

The Carrier domain occupies 4–79 (RDILLKIKEI…ELIAEVKHLI (76 aa)). O-(pantetheine 4'-phosphoryl)serine is present on Ser-39.

Post-translationally, 4'-phosphopantetheine is transferred from CoA to a specific serine of the apo-ACP-like protein.

It participates in lipid metabolism; fatty acid biosynthesis. In terms of biological role, carrier of the growing fatty acid chain in fatty acid biosynthesis. This chain is Acyl carrier protein homolog, found in Mycoplasma pneumoniae (strain ATCC 29342 / M129 / Subtype 1) (Mycoplasmoides pneumoniae).